We begin with the raw amino-acid sequence, 245 residues long: tRNA (guanine-N(1)-)-methyltransferase (245 aa).

S-adenosyl-L-methionine-binding positions include glycine 111 and 131–136; that span reads MGDYVL.

It belongs to the RNA methyltransferase TrmD family. Homodimer.

It localises to the cytoplasm. The catalysed reaction is guanosine(37) in tRNA + S-adenosyl-L-methionine = N(1)-methylguanosine(37) in tRNA + S-adenosyl-L-homocysteine + H(+). Its function is as follows. Specifically methylates guanosine-37 in various tRNAs. This Staphylococcus epidermidis (strain ATCC 12228 / FDA PCI 1200) protein is tRNA (guanine-N(1)-)-methyltransferase.